The chain runs to 144 residues: Superoxide dismutase [Mn] (144 aa).

The disordered stretch occupies residues 1–22 (GYVNGLESAEETLAENRESGDF). Residues histidine 42, aspartate 124, and histidine 128 each coordinate Mn(2+).

This sequence belongs to the iron/manganese superoxide dismutase family. The cofactor is Mn(2+).

It carries out the reaction 2 superoxide + 2 H(+) = H2O2 + O2. Its function is as follows. Destroys superoxide anion radicals which are normally produced within the cells and which are toxic to biological systems. The protein is Superoxide dismutase [Mn] (sod) of Haloarcula hispanica.